The primary structure comprises 235 residues: DNA repair protein RecO (235 aa).

Belongs to the RecO family.

In terms of biological role, involved in DNA repair and RecF pathway recombination. The chain is DNA repair protein RecO from Enterobacter sp. (strain 638).